Reading from the N-terminus, the 187-residue chain is dTTP/UTP pyrophosphatase (187 aa).

Residue aspartate 64 is the Proton acceptor of the active site.

The protein belongs to the Maf family. YhdE subfamily. A divalent metal cation serves as cofactor.

The protein resides in the cytoplasm. It carries out the reaction dTTP + H2O = dTMP + diphosphate + H(+). It catalyses the reaction UTP + H2O = UMP + diphosphate + H(+). Functionally, nucleoside triphosphate pyrophosphatase that hydrolyzes dTTP and UTP. May have a dual role in cell division arrest and in preventing the incorporation of modified nucleotides into cellular nucleic acids. The protein is dTTP/UTP pyrophosphatase of Leptospira interrogans serogroup Icterohaemorrhagiae serovar Lai (strain 56601).